A 247-amino-acid polypeptide reads, in one-letter code: NAD-dependent protein deacetylase (247 aa).

The Deacetylase sirtuin-type domain maps to 1–244; sequence MIYEKVAEEL…PKILENVRQK (244 aa). Residues Ala-22, Thr-26, Phe-33, Arg-34, Gln-98, Ile-100, Asp-101, and His-116 each contribute to the NAD(+) site. Residue Phe-33 participates in nicotinamide binding. Residues Ile-100 and Asp-101 each contribute to the nicotinamide site. His-116 (proton acceptor) is an active-site residue. Zn(2+)-binding residues include Cys-124, Cys-127, Cys-149, and Cys-151. Ser-187, Ser-188, Asn-212, and Val-230 together coordinate NAD(+).

The protein belongs to the sirtuin family. Class U subfamily. In terms of assembly, monomer. Requires Zn(2+) as cofactor.

The protein localises to the cytoplasm. The catalysed reaction is N(6)-acetyl-L-lysyl-[protein] + NAD(+) + H2O = 2''-O-acetyl-ADP-D-ribose + nicotinamide + L-lysyl-[protein]. NAD-dependent protein deacetylase which modulates the activities of several enzymes which are inactive in their acetylated form. Deacetylates the N-terminal lysine residue of albA1, the major archaeal DNA compaction protein and that, in turn, increases albA1's DNA binding affinity, thereby repressing transcription. The sequence is that of NAD-dependent protein deacetylase from Saccharolobus solfataricus (strain ATCC 35092 / DSM 1617 / JCM 11322 / P2) (Sulfolobus solfataricus).